The following is a 302-amino-acid chain: tRNA dimethylallyltransferase (302 aa).

An ATP-binding site is contributed by 12 to 19; it reads GPTASGKS. 14–19 contributes to the substrate binding site; sequence TASGKS. The tract at residues 37–40 is interaction with substrate tRNA; the sequence is DSMQ.

The protein belongs to the IPP transferase family. In terms of assembly, monomer. Requires Mg(2+) as cofactor.

It carries out the reaction adenosine(37) in tRNA + dimethylallyl diphosphate = N(6)-dimethylallyladenosine(37) in tRNA + diphosphate. Catalyzes the transfer of a dimethylallyl group onto the adenine at position 37 in tRNAs that read codons beginning with uridine, leading to the formation of N6-(dimethylallyl)adenosine (i(6)A). In Corynebacterium diphtheriae (strain ATCC 700971 / NCTC 13129 / Biotype gravis), this protein is tRNA dimethylallyltransferase.